A 330-amino-acid chain; its full sequence is MEERYDVTIIGGGPAGMFAAFYCGLHQLKAQLIEALPQLGGQPAALYPEKRVWDVAGKAGVTGQELADDLAAQIEVAPVDQFLGEKVTDVVKEDDGSFTIHSAKRTSTSKSIVIAMGNGAFSPRKLALPGAEELEGKQVRYFANHKEDFKDQRVAVLGGGDAAIDMALMLEDVAEQVYLVHRRDAFRALEHTVAQLEASTIEKLTPYLPKDLTVNADQSVTLNLKKMRADEERPLEVDKVLVNYGFTSNNAALKDWSLDLASERGQIKVDQTMKTSVPGVYAIGDGVVYEGKVALIATGFGEAPTAITNLAKELYPDKRMAIHSSSMGIG.

E34, Q42, Y47, V87, F121, D285, and S325 together coordinate FAD.

The protein belongs to the ferredoxin--NADP reductase type 2 family. Homodimer. FAD serves as cofactor.

The enzyme catalyses 2 reduced [2Fe-2S]-[ferredoxin] + NADP(+) + H(+) = 2 oxidized [2Fe-2S]-[ferredoxin] + NADPH. The sequence is that of Ferredoxin--NADP reductase from Limosilactobacillus fermentum (strain NBRC 3956 / LMG 18251) (Lactobacillus fermentum).